A 412-amino-acid polypeptide reads, in one-letter code: Putative F-box protein At3g22940 (412 aa).

The F-box domain occupies 1–38 (MPLEEILSRLPLKSTRAVRSTCKKWDSLFKNRSFISKA).

The chain is Putative F-box protein At3g22940 from Arabidopsis thaliana (Mouse-ear cress).